Consider the following 305-residue polypeptide: UDP-N-acetylenolpyruvoylglucosamine reductase 2 (305 aa).

One can recognise an FAD-binding PCMH-type domain in the interval 33-197; it reads VGGKADVFVA…LEARFELEEG (165 aa). The active site involves arginine 176. Serine 226 (proton donor) is an active-site residue. Glutamate 296 is a catalytic residue.

It belongs to the MurB family. The cofactor is FAD.

The protein localises to the cytoplasm. The catalysed reaction is UDP-N-acetyl-alpha-D-muramate + NADP(+) = UDP-N-acetyl-3-O-(1-carboxyvinyl)-alpha-D-glucosamine + NADPH + H(+). Its pathway is cell wall biogenesis; peptidoglycan biosynthesis. Its function is as follows. Cell wall formation. In Bacillus thuringiensis subsp. konkukian (strain 97-27), this protein is UDP-N-acetylenolpyruvoylglucosamine reductase 2.